The sequence spans 73 residues: Translation initiation factor IF-1 (73 aa).

The region spanning 1-73 (MANKEELIEF…SKGRITYRAR (73 aa)) is the S1-like domain.

The protein belongs to the IF-1 family. As to quaternary structure, component of the 30S ribosomal translation pre-initiation complex which assembles on the 30S ribosome in the order IF-2 and IF-3, IF-1 and N-formylmethionyl-tRNA(fMet); mRNA recruitment can occur at any time during PIC assembly.

Its subcellular location is the cytoplasm. Its function is as follows. One of the essential components for the initiation of protein synthesis. Stabilizes the binding of IF-2 and IF-3 on the 30S subunit to which N-formylmethionyl-tRNA(fMet) subsequently binds. Helps modulate mRNA selection, yielding the 30S pre-initiation complex (PIC). Upon addition of the 50S ribosomal subunit IF-1, IF-2 and IF-3 are released leaving the mature 70S translation initiation complex. In Acinetobacter baylyi (strain ATCC 33305 / BD413 / ADP1), this protein is Translation initiation factor IF-1.